An 825-amino-acid chain; its full sequence is Phenylalanine--tRNA ligase beta subunit (825 aa).

The region spanning 39–154 (RSWAEGVVLG…KAHPLGSDAR (116 aa)) is the tRNA-binding domain. Residues 411–506 (PLERTLKLRL…RLYGYDRFSE (96 aa)) enclose the B5 domain. Mg(2+) is bound by residues Asp484, Asp490, Glu493, and Glu494. Residues 731 to 824 (SPFPASDRDI…LEKHFPVTLR (94 aa)) enclose the FDX-ACB domain.

Belongs to the phenylalanyl-tRNA synthetase beta subunit family. Type 1 subfamily. Tetramer of two alpha and two beta subunits. Mg(2+) is required as a cofactor.

The protein resides in the cytoplasm. It carries out the reaction tRNA(Phe) + L-phenylalanine + ATP = L-phenylalanyl-tRNA(Phe) + AMP + diphosphate + H(+). In Synechococcus sp. (strain JA-3-3Ab) (Cyanobacteria bacterium Yellowstone A-Prime), this protein is Phenylalanine--tRNA ligase beta subunit.